Reading from the N-terminus, the 403-residue chain is Phosphoglycerate kinase (403 aa).

Substrate contacts are provided by residues aspartate 21–asparagine 23, arginine 36, histidine 59–arginine 62, arginine 119, and arginine 154. ATP-binding positions include lysine 207, glycine 299, glutamate 330, and glycine 357–alanine 360.

The protein belongs to the phosphoglycerate kinase family. In terms of assembly, monomer.

The protein resides in the cytoplasm. It catalyses the reaction (2R)-3-phosphoglycerate + ATP = (2R)-3-phospho-glyceroyl phosphate + ADP. The protein operates within carbohydrate degradation; glycolysis; pyruvate from D-glyceraldehyde 3-phosphate: step 2/5. This Chlamydia trachomatis serovar A (strain ATCC VR-571B / DSM 19440 / HAR-13) protein is Phosphoglycerate kinase.